We begin with the raw amino-acid sequence, 224 residues long: Rhodanese-like domain-containing protein 14, chloroplastic (224 aa).

The transit peptide at 1–48 (MASLTSIATPYPSSSQALRLKSSGNTLFSAGVRSAAMVSGHKTLKIQC) directs the protein to the chloroplast. The 134-residue stretch at 87–220 (KENNFVILDV…WGKEGLPVET (134 aa)) folds into the Rhodanese domain. C166 (cysteine persulfide intermediate) is an active-site residue.

It is found in the plastid. The protein resides in the chloroplast. In Arabidopsis thaliana (Mouse-ear cress), this protein is Rhodanese-like domain-containing protein 14, chloroplastic.